The primary structure comprises 174 residues: Ribosome maturation factor RimP (174 aa).

The protein belongs to the RimP family.

The protein localises to the cytoplasm. Its function is as follows. Required for maturation of 30S ribosomal subunits. The polypeptide is Ribosome maturation factor RimP (Acinetobacter baylyi (strain ATCC 33305 / BD413 / ADP1)).